The sequence spans 71 residues: Translation initiation factor IF-1 (71 aa).

Residues 1 to 71 (MKEKNIEMQG…SKGRIIFRSR (71 aa)) enclose the S1-like domain.

Belongs to the IF-1 family. In terms of assembly, component of the 30S ribosomal translation pre-initiation complex which assembles on the 30S ribosome in the order IF-2 and IF-3, IF-1 and N-formylmethionyl-tRNA(fMet); mRNA recruitment can occur at any time during PIC assembly.

It is found in the cytoplasm. One of the essential components for the initiation of protein synthesis. Stabilizes the binding of IF-2 and IF-3 on the 30S subunit to which N-formylmethionyl-tRNA(fMet) subsequently binds. Helps modulate mRNA selection, yielding the 30S pre-initiation complex (PIC). Upon addition of the 50S ribosomal subunit IF-1, IF-2 and IF-3 are released leaving the mature 70S translation initiation complex. This Buchnera aphidicola subsp. Cinara cedri (strain Cc) protein is Translation initiation factor IF-1.